Consider the following 1322-residue polypeptide: Transcription elongation factor SPT6-like (1322 aa).

Over residues 1 to 17 the composition is skewed to basic and acidic residues; sequence MNRIDEEPQIHEDPVEN. Disordered stretches follow at residues 1–65 and 90–113; these read MNRI…KKDE and KRLK…DLSH. A compositionally biased stretch (acidic residues) spans 18-33; it reads REEDDEDEDDQYEFDD. The span at 48 to 65 shows a compositional bias: basic and acidic residues; that stretch reads EQRHCSEKKSRSRRKKDE. Over residues 97 to 110 the composition is skewed to acidic residues; it reads EEEDKINNDDDDDD. Residues 1017–1088 enclose the S1 motif domain; that stretch reads GRIVQATVKK…QRYHVLLVCK (72 aa).

This sequence belongs to the SPT6 family.

It localises to the nucleus. In terms of biological role, transcription elongation factor that enhances the transcription elongation by RNA polymerase II (RNAPII). This is Transcription elongation factor SPT6-like from Arabidopsis thaliana (Mouse-ear cress).